A 213-amino-acid chain; its full sequence is Proton-translocating ferredoxin:NAD(+) oxidoreductase complex subunit E (213 aa).

6 helical membrane-spanning segments follow: residues 11 to 31 (GLIAENPIFVLALSLCPALAT), 39 to 59 (FTMGICVLFVITCNNTVVSII), 69 to 89 (VPVYITCIATIVTVVELVMQA), 93 to 113 (LLYKQLGIYLALVVVFAIILA), 128 to 148 (FFDGLGMGCGFTLALTIIGMI), and 170 to 190 (ALIMILPPGGFILIGYLVAIV).

This sequence belongs to the NqrDE/RnfAE family. In terms of assembly, the complex is composed of six subunits: RnfA, RnfB, RnfC, RnfD, RnfE and RnfG.

The protein resides in the cell membrane. Functionally, part of a membrane-bound complex that couples electron transfer with translocation of ions across the membrane. Couples electron transfer from reduced ferredoxin to NAD(+) with translocation of H(+) out of the cell. Essential for energy conservation during autotrophic growth. Contributes to ATP synthesis during heterotrophic growth. This chain is Proton-translocating ferredoxin:NAD(+) oxidoreductase complex subunit E, found in Clostridium ljungdahlii (strain ATCC 55383 / DSM 13528 / PETC).